Here is a 140-residue protein sequence, read N- to C-terminus: Small ribosomal subunit protein eS17y (140 aa).

This sequence belongs to the eukaryotic ribosomal protein eS17 family.

This Arabidopsis thaliana (Mouse-ear cress) protein is Small ribosomal subunit protein eS17y (RPS17B).